Here is a 260-residue protein sequence, read N- to C-terminus: Ribosomal RNA small subunit methyltransferase G (260 aa).

The interval 1 to 45 (MKQRGPAGGRSSSPKPSAPGSGAGEGPDGRSAPASQKINKASAND) is disordered. The span at 9–20 (GRSSSPKPSAPG) shows a compositional bias: low complexity. A compositionally biased stretch (polar residues) spans 33 to 45 (PASQKINKASAND). S-adenosyl-L-methionine is bound by residues G123, F128, and R193.

This sequence belongs to the methyltransferase superfamily. RNA methyltransferase RsmG family.

It is found in the cytoplasm. The catalysed reaction is guanosine(527) in 16S rRNA + S-adenosyl-L-methionine = N(7)-methylguanosine(527) in 16S rRNA + S-adenosyl-L-homocysteine. In terms of biological role, specifically methylates the N7 position of guanine in position 527 of 16S rRNA. The sequence is that of Ribosomal RNA small subunit methyltransferase G from Bradyrhizobium diazoefficiens (strain JCM 10833 / BCRC 13528 / IAM 13628 / NBRC 14792 / USDA 110).